We begin with the raw amino-acid sequence, 492 residues long: Catalase (492 aa).

Active-site residues include His-65 and Asn-138. Tyr-348 contributes to the heme binding site.

The protein belongs to the catalase family. Homotetramer. It depends on heme as a cofactor.

It localises to the cytoplasm. The protein localises to the cytosol. It is found in the peroxisome matrix. It catalyses the reaction 2 H2O2 = O2 + 2 H2O. Catalyzes the degradation of hydrogen peroxide (H(2)O(2)) generated by peroxisomal oxidases to water and oxygen, thereby protecting cells from the toxic effects of hydrogen peroxide. This chain is Catalase (CATA), found in Triticum aestivum (Wheat).